Here is a 247-residue protein sequence, read N- to C-terminus: tRNA pseudouridine synthase A (247 aa).

Asp52 (nucleophile) is an active-site residue. Tyr111 serves as a coordination point for substrate.

Belongs to the tRNA pseudouridine synthase TruA family. As to quaternary structure, homodimer.

It catalyses the reaction uridine(38/39/40) in tRNA = pseudouridine(38/39/40) in tRNA. Functionally, formation of pseudouridine at positions 38, 39 and 40 in the anticodon stem and loop of transfer RNAs. This Caulobacter vibrioides (strain ATCC 19089 / CIP 103742 / CB 15) (Caulobacter crescentus) protein is tRNA pseudouridine synthase A.